Reading from the N-terminus, the 314-residue chain is DNA-directed RNA polymerase subunit alpha (314 aa).

Residues 1 to 228 form an alpha N-terminal domain (alpha-NTD) region; that stretch reads MIEIEKPVIE…EHLNIFVGLT (228 aa). An alpha C-terminal domain (alpha-CTD) region spans residues 245–314; the sequence is KEKVLEMTIE…ELGLGLRKEE (70 aa).

It belongs to the RNA polymerase alpha chain family. Homodimer. The RNAP catalytic core consists of 2 alpha, 1 beta, 1 beta' and 1 omega subunit. When a sigma factor is associated with the core the holoenzyme is formed, which can initiate transcription.

The catalysed reaction is RNA(n) + a ribonucleoside 5'-triphosphate = RNA(n+1) + diphosphate. Its function is as follows. DNA-dependent RNA polymerase catalyzes the transcription of DNA into RNA using the four ribonucleoside triphosphates as substrates. This is DNA-directed RNA polymerase subunit alpha from Halalkalibacterium halodurans (strain ATCC BAA-125 / DSM 18197 / FERM 7344 / JCM 9153 / C-125) (Bacillus halodurans).